The sequence spans 261 residues: 1-(5-phosphoribosyl)-5-[(5-phosphoribosylamino)methylideneamino] imidazole-4-carboxamide isomerase (261 aa).

Catalysis depends on D8, which acts as the Proton acceptor. Catalysis depends on D130, which acts as the Proton donor.

This sequence belongs to the HisA/HisF family.

The protein resides in the cytoplasm. The catalysed reaction is 1-(5-phospho-beta-D-ribosyl)-5-[(5-phospho-beta-D-ribosylamino)methylideneamino]imidazole-4-carboxamide = 5-[(5-phospho-1-deoxy-D-ribulos-1-ylimino)methylamino]-1-(5-phospho-beta-D-ribosyl)imidazole-4-carboxamide. It participates in amino-acid biosynthesis; L-histidine biosynthesis; L-histidine from 5-phospho-alpha-D-ribose 1-diphosphate: step 4/9. This Prosthecochloris aestuarii (strain DSM 271 / SK 413) protein is 1-(5-phosphoribosyl)-5-[(5-phosphoribosylamino)methylideneamino] imidazole-4-carboxamide isomerase.